A 1658-amino-acid chain; its full sequence is Silent chromatin protein ESC1 (1658 aa).

Over residues 36 to 54 (DSKMKDQHGYSRVHNDKYR) the composition is skewed to basic and acidic residues. 2 disordered regions span residues 36–76 (DSKM…SSHI) and 156–499 (TSFQ…LENE). Composition is skewed to acidic residues over residues 205 to 214 (LENDEYELSE) and 245 to 254 (SNDEYAEEEG). A compositionally biased stretch (polar residues) spans 262–286 (GQEQANVENATQISSSDSSEGQNYS). The span at 289–305 (VEMELEDDIDVESDAEK) shows a compositional bias: acidic residues. Over residues 335-352 (VIEKYESDEHKVHQRYSE) the composition is skewed to basic and acidic residues. A compositionally biased stretch (acidic residues) spans 365–375 (VDDESEDEESQ). Over residues 386-397 (VYHHNEHELDDK) the composition is skewed to basic and acidic residues. Over residues 398–407 (ELIEDIESSD) the composition is skewed to acidic residues. A compositionally biased stretch (low complexity) spans 408-417 (SESQSAQESE). 3 stretches are compositionally biased toward basic and acidic residues: residues 425–435 (EYKMKNEKSTS), 442–461 (SESR…KVEQ), and 471–482 (DDIIRSSLDKNF). Threonine 500 carries the post-translational modification Phosphothreonine. Serine 532 is modified (phosphoserine). Disordered regions lie at residues 550-584 (SRNS…DESE) and 589-608 (LKDF…GDLS). The span at 568 to 577 (GHSNGSNLSG) shows a compositional bias: polar residues. Serine 579, serine 583, serine 608, and serine 662 each carry phosphoserine. Disordered regions lie at residues 770–819 (SKET…EDNT), 863–964 (EMSS…VKGT), and 1082–1115 (ENNT…GSAK). Over residues 800-812 (QSKNFPGVANSTD) the composition is skewed to polar residues. A phosphoserine mark is found at serine 865 and serine 866. Residues 869–878 (ECVKQNDDGS) show a composition bias toward basic and acidic residues. A compositionally biased stretch (polar residues) spans 879–905 (KTQISFSTDSPDNFQESNDNTEFSSTK). A phosphoserine mark is found at serine 888 and serine 911. The span at 918–931 (SLKKELTKAEVVDK) shows a compositional bias: basic and acidic residues. The span at 932–956 (LDEEESEDSYEQDYADPEPGNDEGS) shows a compositional bias: acidic residues. Phosphoserine occurs at positions 937, 1092, 1096, 1098, 1166, 1176, and 1178. Residues 1082-1096 (ENNTNMHDQVSQACS) are compositionally biased toward polar residues. The span at 1097–1115 (DSDRDQDSTAEKNVEGSAK) shows a compositional bias: basic and acidic residues. Over residues 1197 to 1207 (STDASVNMKSV) the composition is skewed to polar residues. Residues 1197-1216 (STDASVNMKSVSSKERDSDE) are disordered. A phosphoserine mark is found at serine 1214 and serine 1254. Positions 1261-1272 (VKDKENLHKSEE) are enriched in basic and acidic residues. Residues 1261–1315 (VKDKENLHKSEEPLVEGLQSEQHFEKKDHSENEEEFDTIYGDITSANIHSNAPDD) are disordered. 3 positions are modified to phosphoserine: serine 1290, serine 1326, and serine 1332. Disordered stretches follow at residues 1334 to 1482 (RLIE…TSPE) and 1503 to 1658 (PATT…SVDK). Residues 1335 to 1366 (LIEDSRRGKNQEESDEVNTSRERDLTFEKSVN) show a composition bias toward basic and acidic residues. Phosphoserine occurs at positions 1403, 1409, 1450, and 1454. Over residues 1407 to 1423 (LNSEPEEAELYELEIEG) the composition is skewed to acidic residues. Residues 1463–1479 (YPYSNSENITAEKSAPT) show a composition bias toward polar residues. Residues 1507–1537 (LEKHDKTNVTSVLDDRSEHLSSHDVDNEPHD) are compositionally biased toward basic and acidic residues. Position 1539 is a phosphoserine (serine 1539). Composition is skewed to basic and acidic residues over residues 1550-1564 (PEHQ…VEVK) and 1575-1591 (VLEE…DKSS). Phosphoserine is present on residues serine 1590 and serine 1591. Basic residues predominate over residues 1607 to 1626 (TKAKKKSRKRNYNSRRRKRK). Over residues 1648-1658 (RGQNTHPSVDK) the composition is skewed to polar residues.

Interacts with SIR4.

The protein localises to the nucleus. Functionally, involved in the clustering of telomeres at the nuclear periphery, forming discrete subcompartments that accumulate a complex of histone-binding silencing factors like SIR4. Required for SIR4-mediated anchoring and partitioning of plasmids. This chain is Silent chromatin protein ESC1 (ESC1), found in Saccharomyces cerevisiae (strain ATCC 204508 / S288c) (Baker's yeast).